Here is a 316-residue protein sequence, read N- to C-terminus: Myb-related protein 306 (316 aa).

2 consecutive HTH myb-type domains span residues 9–65 (KIGV…RPGI) and 66–116 (KRGD…KKKL). 2 DNA-binding regions (H-T-H motif) span residues 37–61 (WRAI…TNYL) and 89–112 (WAAI…NTHL). Disordered stretches follow at residues 119–144 (LQSP…SKGQ), 168–193 (KTSS…QAST), and 209–230 (KKSP…TTTS). The span at 135–144 (DSDKSVSKGQ) shows a compositional bias: basic and acidic residues. Over residues 181 to 193 (VQTTQPRPFQAST) the composition is skewed to polar residues. Over residues 216–230 (SSTSQAGSSESTTTS) the composition is skewed to low complexity.

Expressed in flowers, leaves and weakly in seed pods.

It is found in the nucleus. Transcription factor. The sequence is that of Myb-related protein 306 from Antirrhinum majus (Garden snapdragon).